A 447-amino-acid polypeptide reads, in one-letter code: N-succinylarginine dihydrolase (447 aa).

Substrate contacts are provided by residues 19-28 (AGLSFGNEAS), asparagine 110, and 137-138 (HR). The active site involves glutamate 174. Substrate is bound at residue arginine 213. The active site involves histidine 249. Residues aspartate 251 and asparagine 364 each coordinate substrate. Cysteine 370 functions as the Nucleophile in the catalytic mechanism.

This sequence belongs to the succinylarginine dihydrolase family. As to quaternary structure, homodimer.

It catalyses the reaction N(2)-succinyl-L-arginine + 2 H2O + 2 H(+) = N(2)-succinyl-L-ornithine + 2 NH4(+) + CO2. It functions in the pathway amino-acid degradation; L-arginine degradation via AST pathway; L-glutamate and succinate from L-arginine: step 2/5. Functionally, catalyzes the hydrolysis of N(2)-succinylarginine into N(2)-succinylornithine, ammonia and CO(2). In Yersinia pestis bv. Antiqua (strain Antiqua), this protein is N-succinylarginine dihydrolase.